A 449-amino-acid chain; its full sequence is CCAAT/enhancer-binding protein (449 aa).

Disordered stretches follow at residues 211-233 (HATYNNSSDENSSVGSDSSTIKE), 276-302 (GNPLNGGNTTPSSNGSNGSTGSSNGSQ), and 334-386 (SKLH…KAKV). 3 stretches are compositionally biased toward low complexity: residues 215–229 (NNSSDENSSVGSDSS), 280–301 (NGGNTTPSSNGSNGSTGSSNGS), and 339–349 (QQQHQQHQQQQ). Residues 357-368 (KHVDKGTDEYRR) are compositionally biased toward basic and acidic residues. Residues 363–426 (TDEYRRRRER…QLHKQIYMQL (64 aa)) enclose the bZIP domain. A basic motif region spans residues 367–396 (RRRRERNNIAVRKSREKAKVRSREVEERVK). Residues 398 to 405 (LLKEKDAL) are leucine-zipper.

It belongs to the bZIP family. C/EBP subfamily. Binds DNA as a dimer and can form stable heterodimers. Interacts with trbl. Ubiquitination/deubiquitination regulates border cell migration. Ubiquitination is stimulated by trbl, which leads to proteasomal degradation and inhibits border cell migration. Deubiquitination by Usp47, leads to its stabilization and promotes border cell migration.

The protein resides in the nucleus. Its function is as follows. Required for the expression of gene products mediating border cell migration. Among the DNA sequences that this protein binds with high affinity is a conserved site within the promoter of its gene. In Drosophila melanogaster (Fruit fly), this protein is CCAAT/enhancer-binding protein (slbo).